The following is a 65-amino-acid chain: Beta-defensin 17 (65 aa).

Positions 1–19 (MKFHLLFFILLFSITILTG) are cleaved as a signal peptide. Intrachain disulfides connect cysteine 35–cysteine 63, cysteine 42–cysteine 56, and cysteine 46–cysteine 64.

The protein belongs to the beta-defensin family.

It localises to the secreted. Functionally, has antibacterial activity. This is Beta-defensin 17 (Defb17) from Rattus norvegicus (Rat).